The primary structure comprises 227 residues: Flagellar L-ring protein 2 (227 aa).

The first 17 residues, 1-17 (MKSKLAITMVSALLLAA), serve as a signal peptide directing secretion. Cys-18 carries N-palmitoyl cysteine lipidation. Cys-18 carries S-diacylglycerol cysteine lipidation.

This sequence belongs to the FlgH family. As to quaternary structure, the basal body constitutes a major portion of the flagellar organelle and consists of four rings (L,P,S, and M) mounted on a central rod.

Its subcellular location is the cell outer membrane. The protein resides in the bacterial flagellum basal body. Its function is as follows. Assembles around the rod to form the L-ring and probably protects the motor/basal body from shearing forces during rotation. This Chromobacterium violaceum (strain ATCC 12472 / DSM 30191 / JCM 1249 / CCUG 213 / NBRC 12614 / NCIMB 9131 / NCTC 9757 / MK) protein is Flagellar L-ring protein 2.